The primary structure comprises 525 residues: Glucose-6-phosphate isomerase (525 aa).

E347 (proton donor) is an active-site residue. Active-site residues include H378 and K493.

Belongs to the GPI family.

It is found in the cytoplasm. The enzyme catalyses alpha-D-glucose 6-phosphate = beta-D-fructose 6-phosphate. It functions in the pathway carbohydrate biosynthesis; gluconeogenesis. It participates in carbohydrate degradation; glycolysis; D-glyceraldehyde 3-phosphate and glycerone phosphate from D-glucose: step 2/4. In terms of biological role, catalyzes the reversible isomerization of glucose-6-phosphate to fructose-6-phosphate. The chain is Glucose-6-phosphate isomerase from Chlamydia trachomatis serovar L2 (strain ATCC VR-902B / DSM 19102 / 434/Bu).